We begin with the raw amino-acid sequence, 257 residues long: 3-methyl-2-oxobutanoate hydroxymethyltransferase (257 aa).

Mg(2+) contacts are provided by Asp42 and Asp86. 3-methyl-2-oxobutanoate-binding positions include 42–43 (DS), Asp86, and Lys116. A Mg(2+)-binding site is contributed by Glu118. Glu185 acts as the Proton acceptor in catalysis.

This sequence belongs to the PanB family. Homodecamer; pentamer of dimers. Requires Mg(2+) as cofactor.

Its subcellular location is the cytoplasm. It carries out the reaction 3-methyl-2-oxobutanoate + (6R)-5,10-methylene-5,6,7,8-tetrahydrofolate + H2O = 2-dehydropantoate + (6S)-5,6,7,8-tetrahydrofolate. Its pathway is cofactor biosynthesis; (R)-pantothenate biosynthesis; (R)-pantoate from 3-methyl-2-oxobutanoate: step 1/2. In terms of biological role, catalyzes the reversible reaction in which hydroxymethyl group from 5,10-methylenetetrahydrofolate is transferred onto alpha-ketoisovalerate to form ketopantoate. This chain is 3-methyl-2-oxobutanoate hydroxymethyltransferase, found in Prochlorococcus marinus (strain MIT 9312).